A 1323-amino-acid polypeptide reads, in one-letter code: PH domain leucine-rich repeat-containing protein phosphatase 2 (1323 aa).

Positions 150–248 constitute a PH domain; sequence RILLSGIYNV…WQRQASKVVS (99 aa). LRR repeat units lie at residues 250–271, 273–296, 300–321, 323–344, 346–368, 369–390, 392–412, 416–439, 440–460, 461–480, 481–502, 503–524, 526–547, 549–570, 571–592, 595–616, 621–644, 645–666, 669–690, 692–713, 714–735, and 737–758; these read RIST…LFYS, DITY…DTLY, QLKG…LCEI, TLTE…IGNL, NLQT…GNLQ, QLSS…YEKL, MLDR…GVLN, HIKH…EGNK, HITH…SSLC, SLEQ…LSGF, SLRT…PVPS, LLTF…ACEA, KIEV…ILSS, SLRK…VEHI, PLEV…LFSK, NLRY…CTGE, MLQL…VGHL, HLRI…KLNK, QLEE…IANC, RLHT…LQLP, QIQF…EALP, and TLQD…TLDI. Residues 785–1033 enclose the PPM-type phosphatase domain; it reads SHGLAEMAGQ…DNVGAMVVYL (249 aa). Mn(2+)-binding residues include aspartate 820, glycine 821, lysine 985, and aspartate 1024. The segment at 1060–1157 is disordered; that stretch reads TIKDAPKPAT…DSDDDQPVEG (98 aa). Over residues 1071–1097 the composition is skewed to low complexity; sequence SSSSGIASEFSSEMSTSEVSSEVGSTA. The segment covering 1122–1146 has biased composition (polar residues); that stretch reads PTPTSGLFQRQPSSATFSSNQSDNG. Serine 1210 carries the post-translational modification Phosphoserine. The disordered stretch occupies residues 1285–1323; it reads HDLEEEVKEQMKQHQDSRLEPEPHEEDRTEPPEEFDTAL. Residues 1292–1315 are compositionally biased toward basic and acidic residues; sequence KEQMKQHQDSRLEPEPHEEDRTEP.

As to quaternary structure, interacts with AKT1, AKT3 and PRKCB isoform beta-II. Interacts with STK4, RPS6KB1, RAF1. Interacts with FKBP5; FKBP5 acts as a scaffold for PHLPP2 and Akt. Interacts with NHERF1; NHERF1 scaffolds a heterotrimeric complex with PTEN. Mn(2+) is required as a cofactor. In terms of tissue distribution, in colorectal cancer tissue, expression is highest in the surface epithelium of normal colonic mucosa adjacent to the cancer tissue but is largely excluded from the crypt bases. Expression is lost or significantly decreased in 80% of tested tumors (at protein level).

The protein resides in the cytoplasm. The protein localises to the membrane. It is found in the nucleus. It carries out the reaction O-phospho-L-seryl-[protein] + H2O = L-seryl-[protein] + phosphate. The catalysed reaction is O-phospho-L-threonyl-[protein] + H2O = L-threonyl-[protein] + phosphate. Its activity is regulated as follows. Inhibited by AKT1, AKT2 and AKT3. Activated by oleic acid and arachidonic acid. Its function is as follows. Protein phosphatase involved in regulation of Akt and PKC signaling. Mediates dephosphorylation in the C-terminal domain hydrophobic motif of members of the AGC Ser/Thr protein kinase family; specifically acts on 'Ser-473' of AKT1, 'Ser-660' of PRKCB isoform beta-II and 'Ser-657' of PRKCA. Akt regulates the balance between cell survival and apoptosis through a cascade that primarily alters the function of transcription factors that regulate pro- and antiapoptotic genes. Dephosphorylation of 'Ser-473' of Akt triggers apoptosis and decreases cell proliferation. Also controls the phosphorylation of AKT3. Dephosphorylates STK4 on 'Thr-387' leading to STK4 activation and apoptosis. Dephosphorylates RPS6KB1 and is involved in regulation of cap-dependent translation. Inhibits cancer cell proliferation and may act as a tumor suppressor. Dephosphorylation of PRKCA and PRKCB leads to their destabilization and degradation. Dephosphorylates RAF1 inhibiting its kinase activity. This Homo sapiens (Human) protein is PH domain leucine-rich repeat-containing protein phosphatase 2 (PHLPP2).